Consider the following 155-residue polypeptide: Ribosome maturation factor RimP (155 aa).

It belongs to the RimP family.

The protein resides in the cytoplasm. Functionally, required for maturation of 30S ribosomal subunits. The protein is Ribosome maturation factor RimP of Macrococcus caseolyticus (strain JCSC5402) (Macrococcoides caseolyticum).